The sequence spans 122 residues: Small ribosomal subunit protein uS13 (122 aa).

Residues 96–122 (PVRGQRTRTNARTRKGPKKTVGVRRAK) are disordered.

The protein belongs to the universal ribosomal protein uS13 family. In terms of assembly, part of the 30S ribosomal subunit. Forms a loose heterodimer with protein S19. Forms two bridges to the 50S subunit in the 70S ribosome.

Functionally, located at the top of the head of the 30S subunit, it contacts several helices of the 16S rRNA. In the 70S ribosome it contacts the 23S rRNA (bridge B1a) and protein L5 of the 50S subunit (bridge B1b), connecting the 2 subunits; these bridges are implicated in subunit movement. Contacts the tRNAs in the A and P-sites. The chain is Small ribosomal subunit protein uS13 from Halothermothrix orenii (strain H 168 / OCM 544 / DSM 9562).